A 182-amino-acid chain; its full sequence is Putative pre-16S rRNA nuclease (182 aa).

This sequence belongs to the YqgF nuclease family.

It localises to the cytoplasm. Functionally, could be a nuclease involved in processing of the 5'-end of pre-16S rRNA. The protein is Putative pre-16S rRNA nuclease of Corynebacterium aurimucosum (strain ATCC 700975 / DSM 44827 / CIP 107346 / CN-1) (Corynebacterium nigricans).